We begin with the raw amino-acid sequence, 265 residues long: Aquaporin-5 (265 aa).

The Cytoplasmic portion of the chain corresponds to 1–12 (MKKEVCSVAFLK). Residues 13 to 33 (AVFAEFLATLIFVFFGLGSAL) form a helical membrane-spanning segment. The Extracellular portion of the chain corresponds to 34 to 39 (KWPSAL). A helical membrane pass occupies residues 40-60 (PTILQIALAFGLAIGTLAQAL). Topologically, residues 61 to 65 (GPVSG) are cytoplasmic. The segment at residues 66 to 74 (GHINPAITL) is an intramembrane region (discontinuously helical). The NPA 1 signature appears at 69–71 (NPA). At 75-87 (ALLVGNQISLLRA) the chain is on the cytoplasmic side. Residues 88–108 (FFYVAAQLVGAIAGAGILYGV) traverse the membrane as a helical segment. Over 109 to 126 (APLNARGNLAVNALNNNT) the chain is Extracellular. N-linked (GlcNAc...) asparagine glycosylation is found at asparagine 124 and asparagine 125. The helical transmembrane segment at 127–147 (TQGQAMVVELILTFQLALCIF) threads the bilayer. Residues 148–158 (ASTDSRRTSPV) lie on the Cytoplasmic side of the membrane. A helical membrane pass occupies residues 159-179 (GSPALSIGLSVTLGHLVGIYF). A topological domain (extracellular) is located at residue threonine 180. The segment at residues 181-191 (GCSMNPARSFG) is an intramembrane region (discontinuously helical). Positions 185–187 (NPA) match the NPA 2 motif. The Extracellular segment spans residues 192-203 (PAVVMNRFSPAH). Residues 204 to 224 (WVFWVGPIVGAVLAAILYFYL) traverse the membrane as a helical segment. The Cytoplasmic portion of the chain corresponds to 225–265 (LFPNSLSLSERVAIIKGTYEPDEDWEEQREERKKTMELTTR).

Belongs to the MIP/aquaporin (TC 1.A.8) family. Homotetramer; each monomer provides an independent water pore. Interacts with TRPV4; the interaction is probably indirect and regulates TRPV4 activation by hypotonicity. As to expression, detected in skin eccrine sweat glands, at the apical cell membrane and at intercellular canaliculi (at protein level).

Its subcellular location is the apical cell membrane. The protein resides in the cell membrane. It localises to the cytoplasmic vesicle membrane. The catalysed reaction is H2O(in) = H2O(out). Functionally, aquaporins form homotetrameric transmembrane channels, with each monomer independently mediating water transport across the plasma membrane along its osmotic gradient. Plays an important role in fluid secretion in salivary glands. Required for TRPV4 activation by hypotonicity. Together with TRPV4, controls regulatory volume decrease in salivary epithelial cells. Seems to play a redundant role in water transport in the eye, lung and in sweat glands. In Homo sapiens (Human), this protein is Aquaporin-5.